The chain runs to 88 residues: uncharacterized protein (88 aa).

This is an uncharacterized protein from Homo sapiens (Human).